We begin with the raw amino-acid sequence, 166 residues long: Cold-inducible RNA-binding protein B (166 aa).

The 79-residue stretch at 5-83 (GKLFIGGLNF…RQIRVDQAGK (79 aa)) folds into the RRM domain. A disordered region spans residues 68 to 166 (GKAVDGRQIR…DSYDSYATHE (99 aa)). Gly residues predominate over residues 92–115 (YRGGSSGGRGFFRGGRGRGGGDRG). Residues 133–149 (GSRDYYSSGRSQGSYGD) are compositionally biased toward low complexity. Residues 157-166 (DSYDSYATHE) are compositionally biased toward basic and acidic residues.

As to quaternary structure, interacts with prmt1. Interacts with elavl1/elrA (via RRM3). Associates with ribosomes. In terms of processing, methylated on arginine residues within RGG motifs. Methylation by prmt1 promotes cytoplasmic accumulation. In adults, most abundant in testis, ovary, brain and liver, with lower expression in kidney and heart.

Its subcellular location is the nucleus. The protein resides in the nucleoplasm. It is found in the cytoplasm. Cold-inducible mRNA binding protein. Acts cooperatively with elavl1/elrA to stabilize AU-rich element (ARE)-containing mRNAs by binding to them and inhibiting their deadenylation. Essential for embryonic gastrulation and neural development, acting to maintain the expression of a set of adhesion molecules, and cell movement during embryogenesis. Required for pronephros development. The chain is Cold-inducible RNA-binding protein B (cirbp-b) from Xenopus laevis (African clawed frog).